The chain runs to 723 residues: UPF0313 protein YgiQ (723 aa).

One can recognise a Radical SAM core domain in the interval 372–650; the sequence is AYEMIRFSIN…KALLRYHDPA (279 aa). [4Fe-4S] cluster is bound by residues cysteine 386, cysteine 390, and cysteine 393. A disordered region spans residues 686-723; that stretch reads EARRQNRNTRPALTKHTPVEHQRQGLAANKKRGKGAGR. Basic residues predominate over residues 714 to 723; sequence NKKRGKGAGR.

It belongs to the UPF0313 family. [4Fe-4S] cluster is required as a cofactor.

The polypeptide is UPF0313 protein YgiQ (Salmonella typhimurium (strain LT2 / SGSC1412 / ATCC 700720)).